Reading from the N-terminus, the 426-residue chain is Histidine--tRNA ligase (426 aa).

Belongs to the class-II aminoacyl-tRNA synthetase family. Homodimer.

It is found in the cytoplasm. The enzyme catalyses tRNA(His) + L-histidine + ATP = L-histidyl-tRNA(His) + AMP + diphosphate + H(+). The protein is Histidine--tRNA ligase of Corynebacterium kroppenstedtii (strain DSM 44385 / JCM 11950 / CIP 105744 / CCUG 35717).